The following is a 121-amino-acid chain: C-X-C motif chemokine 11-6 (121 aa).

A signal peptide spans 1–20 (MKTLAAFLLLSCLIAGEVNG). Cystine bridges form between Cys-29-Cys-56 and Cys-31-Cys-73. The segment at 95–121 (QSVPHSTTTGTVKSSMTSSTSAPTAFK) is disordered. Low complexity predominate over residues 100–115 (STTTGTVKSSMTSSTS).

Belongs to the intercrine alpha (chemokine CxC) family.

It localises to the secreted. In terms of biological role, ligand for cxcr3.2. Chemotactic for macrophages. The sequence is that of C-X-C motif chemokine 11-6 from Danio rerio (Zebrafish).